Consider the following 103-residue polypeptide: Truncated secreted TNF-receptor-like protein A53 (103 aa).

The stretch at 36–73 (SCDKGEYLDKRHNQCCNRCPPGEFAKVRCNGNDNTKCE) is one TNFR-Cys 1 repeat. Disulfide bonds link C37-C50, C51-C64, and C54-C72. The TNFR-Cys 2; truncated repeat unit spans residues 74 to 103 (RCPPHTYTTIPIILMDVINVENAQQDHLIR).

The protein belongs to the poxviridae A53R protein family.

The sequence is that of Truncated secreted TNF-receptor-like protein A53 from Vaccinia virus (strain Copenhagen) (VACV).